A 271-amino-acid polypeptide reads, in one-letter code: MKI67 FHA domain-interacting nucleolar phosphoprotein (271 aa).

The disordered stretch occupies residues 1–20 (MAEYSGPAKPTLALNPREDS). Alanine 2 is subject to N-acetylalanine. Lysine 37 is covalently cross-linked (Glycyl lysine isopeptide (Lys-Gly) (interchain with G-Cter in SUMO2)). The 79-residue stretch at 44–122 (GVVYLGHLPS…RLLSCKFMPR (79 aa)) folds into the RRM domain. Position 113 is an omega-N-methylarginine (arginine 113). Glycyl lysine isopeptide (Lys-Gly) (interchain with G-Cter in SUMO2) cross-links involve residues lysine 178 and lysine 191. Threonine 213 and threonine 217 each carry phosphothreonine. Arginine 223 and arginine 224 each carry omega-N-methylated arginine. Serine 226 carries the phosphoserine modification. The segment at 242-271 (PVSPVKEDTQKTPAPESSGKKRLRKRKSKQ) is disordered. A Glycyl lysine isopeptide (Lys-Gly) (interchain with G-Cter in SUMO1); alternate cross-link involves residue lysine 247. Lysine 247 is covalently cross-linked (Glycyl lysine isopeptide (Lys-Gly) (interchain with G-Cter in SUMO2); alternate). Over residues 261–271 (KKRLRKRKSKQ) the composition is skewed to basic residues.

As to quaternary structure, binds to the FHA domain of MKI67; this interaction is enhanced in mitosis. In terms of processing, phosphorylated.

Its subcellular location is the nucleus. The protein resides in the nucleolus. It localises to the chromosome. This is MKI67 FHA domain-interacting nucleolar phosphoprotein (Nifk) from Rattus norvegicus (Rat).